The primary structure comprises 570 residues: AT-rich interactive domain-containing protein 3A (570 aa).

The disordered stretch occupies residues 102–215; it reads AGVPNSSSGH…LAPQAQSQHH (114 aa). The span at 120–160 shows a compositional bias: acidic residues; that stretch reads DIDDEDDEDDDPELDRGMDDEERDMDEDDSMNEGGGDEDLE. Phosphoserine is present on S179. Residues 232–324 enclose the ARID domain; that stretch reads DEKRKEFLDD…YLYPYECEKR (93 aa). Phosphoserine is present on S356. Residues 429-523 enclose the REKLES domain; the sequence is AALEQLREKL…GVLFARKPAI (95 aa). Residues 430-473 are important for nuclear localization; the sequence is ALEQLREKLESGEPPEKKVMLMAEEQQRIMQHALQQNLFAMATQ. The interval 475 to 495 is homodimerization; that stretch reads PMNIKLNNRDDRQETALNLST. Residues 519 to 531 are important for cytoplasmic localization; the sequence is RKPAIGFMPSSQR. Residues 528 to 570 are disordered; it reads SSQRVHHQHSSQGKSNSPGLSSHIQPSSSASSSASSHGPATSP. S542 and S569 each carry phosphoserine. Positions 548–570 are enriched in low complexity; that stretch reads SSHIQPSSSASSSASSHGPATSP.

Homodimer.

It localises to the nucleus. The protein resides in the cytoplasm. Functionally, transcription factor. The polypeptide is AT-rich interactive domain-containing protein 3A (arid3a) (Danio rerio (Zebrafish)).